Reading from the N-terminus, the 56-residue chain is uncharacterized protein (56 aa).

This is an uncharacterized protein from Dictyostelium discoideum (Social amoeba).